We begin with the raw amino-acid sequence, 365 residues long: Histidine biosynthesis bifunctional protein HisB (365 aa).

Residues 1 to 176 (MTQQPTLFID…VADPKGLGQP (176 aa)) are histidinol-phosphatase. Asp10 serves as the catalytic Nucleophile. Positions 10 and 12 each coordinate Mg(2+). Asp12 functions as the Proton donor in the catalytic mechanism. Residues Cys93, His95, Cys101, and Cys103 each coordinate Zn(2+). Asp130 contributes to the Mg(2+) binding site. Residues 177 to 365 (RHAVVARKTK…NEMPSSKGVL (189 aa)) form an imidazoleglycerol-phosphate dehydratase region.

The protein in the N-terminal section; belongs to the histidinol-phosphatase family. It in the C-terminal section; belongs to the imidazoleglycerol-phosphate dehydratase family. Mg(2+) serves as cofactor. Requires Zn(2+) as cofactor.

The protein localises to the cytoplasm. It catalyses the reaction D-erythro-1-(imidazol-4-yl)glycerol 3-phosphate = 3-(imidazol-4-yl)-2-oxopropyl phosphate + H2O. It carries out the reaction L-histidinol phosphate + H2O = L-histidinol + phosphate. It participates in amino-acid biosynthesis; L-histidine biosynthesis; L-histidine from 5-phospho-alpha-D-ribose 1-diphosphate: step 6/9. Its pathway is amino-acid biosynthesis; L-histidine biosynthesis; L-histidine from 5-phospho-alpha-D-ribose 1-diphosphate: step 8/9. The chain is Histidine biosynthesis bifunctional protein HisB from Mannheimia succiniciproducens (strain KCTC 0769BP / MBEL55E).